The sequence spans 577 residues: MSDGKSVEKEEALSVNEHLKTDSDFLRGTIQEGLDTAVTGSFSEGDQQLIKFHGFYQQDDRDLRNERKEQKLEPLYSFMLRARVAGGVCSPEQWLGVDEISSTLTSSNSIRLTTRQTFQYHGISKRNLRTLIQGLDSKALDSIAACGDVNRNVMCNPNPVESRLHEQAYYWAKQLSDQYLPRTKAYAEIWLGDDKVATSEGDDVEPVYGKTYLPRKFKMAVAVPPDNDVDVYTNDLGFVAVAEEGELVGFNLVAGGGMGSTHGEVQTFPRLADDFGFIKAEDTLKFAEAVLKVQRDWGNRSNRKLSRLKYTIVKYGYEAFKAEVEKRAGVKFEPKRDVVIGDRGDRYGWIKGVDNKWHLTLFIEGGRIKDLPGQPLQTGLREIAKIHKGDFRMTSNQNFIIASVAEEDKAEIEALARSHGLMGKLITETRGRSIACVALPTCALAMAEAERYFPDFLSKVESLQEKHGFLDQGIVIRMTGCPNGCARPFAAEIGLVGKAPGRYNLYLGASFEGTRLNKLYRENIQEAEILSELDSLFARYVAEREEGETFGNFTVRIGAVSAVIDAAKDFHEQHNHA.

Cys-436, Cys-442, Cys-481, and Cys-485 together coordinate [4Fe-4S] cluster. Cys-485 provides a ligand contact to siroheme.

The protein belongs to the nitrite and sulfite reductase 4Fe-4S domain family. Alpha(8)-beta(8). The alpha component is a flavoprotein, the beta component is a hemoprotein. Requires siroheme as cofactor. [4Fe-4S] cluster serves as cofactor.

The catalysed reaction is hydrogen sulfide + 3 NADP(+) + 3 H2O = sulfite + 3 NADPH + 4 H(+). Its pathway is sulfur metabolism; hydrogen sulfide biosynthesis; hydrogen sulfide from sulfite (NADPH route): step 1/1. Its function is as follows. Component of the sulfite reductase complex that catalyzes the 6-electron reduction of sulfite to sulfide. This is one of several activities required for the biosynthesis of L-cysteine from sulfate. The polypeptide is Sulfite reductase [NADPH] hemoprotein beta-component (Shewanella woodyi (strain ATCC 51908 / MS32)).